The primary structure comprises 303 residues: Dihydroorotate dehydrogenase B (NAD(+)), catalytic subunit (303 aa).

FMN-binding positions include S21 and 45–46 (KG). Substrate contacts are provided by residues K45 and 69–73 (NAVGL). Positions 99 and 127 each coordinate FMN. A substrate-binding site is contributed by N127. The active-site Nucleophile is C130. Residues K165 and I191 each coordinate FMN. Substrate is bound at residue 192–193 (NT). FMN contacts are provided by residues G217, 243–244 (GG), and 265–266 (GT).

This sequence belongs to the dihydroorotate dehydrogenase family. Type 1 subfamily. As to quaternary structure, heterotetramer of 2 PyrK and 2 PyrD type B subunits. FMN is required as a cofactor.

Its subcellular location is the cytoplasm. It carries out the reaction (S)-dihydroorotate + NAD(+) = orotate + NADH + H(+). The protein operates within pyrimidine metabolism; UMP biosynthesis via de novo pathway; orotate from (S)-dihydroorotate (NAD(+) route): step 1/1. In terms of biological role, catalyzes the conversion of dihydroorotate to orotate with NAD(+) as electron acceptor. This Bacteroides thetaiotaomicron (strain ATCC 29148 / DSM 2079 / JCM 5827 / CCUG 10774 / NCTC 10582 / VPI-5482 / E50) protein is Dihydroorotate dehydrogenase B (NAD(+)), catalytic subunit (pyrD).